The following is a 226-amino-acid chain: Late protein I226R (226 aa).

Positions 1–16 (MKMETFLVCLFHNAKG) are cleaved as a signal peptide. Asparagine 164 carries an N-linked (GlcNAc...) asparagine; by host glycan.

This sequence belongs to the asfivirus I226R family.

In terms of biological role, plays a role in the inhibition of host NF-kappa-B and IRF3 signaling pathways. Mechanistically, promotes the degradation of host IKBKG through enhancing its ubiquitination leading to inhibition of both pathways. This chain is Late protein I226R, found in Ornithodoros (relapsing fever ticks).